Consider the following 243-residue polypeptide: Venom nerve growth factor (243 aa).

The N-terminal stretch at 1–18 (MSMLCYTLIIAFLIGIWA) is a signal peptide. A propeptide spanning residues 19–125 (APKSEDNVPL…TLNRNIWANN (107 aa)) is cleaved from the precursor. A compositionally biased stretch (basic and acidic residues) spans 47-66 (GLKTSRNTDQHHPTPKKSED). The disordered stretch occupies residues 47 to 70 (GLKTSRNTDQHHPTPKKSEDQELG). Disulfide bonds link cysteine 139–cysteine 204, cysteine 182–cysteine 232, and cysteine 192–cysteine 234. Asparagine 148 carries an N-linked (GlcNAc...) asparagine glycan.

The protein belongs to the NGF-beta family. Homodimer. In terms of tissue distribution, expressed by the venom gland.

It is found in the secreted. Its function is as follows. Nerve growth factor is important for the development and maintenance of the sympathetic and sensory nervous systems. It stimulates division and differentiation of sympathetic and embryonic sensory neurons as well as basal forebrain cholinergic neurons in the brain. Its relevance in the snake venom is not clear. However, it has been shown to inhibit metalloproteinase-dependent proteolysis of platelet glycoprotein Ib alpha, suggesting a metalloproteinase inhibition to prevent metalloprotease autodigestion and/or protection against prey proteases. Binds a lipid between the two protein chains in the homodimer. The lipid-bound form promotes histamine relase from mouse mast cells, contrary to the lipid-free form. In Bungarus multicinctus (Many-banded krait), this protein is Venom nerve growth factor.